Reading from the N-terminus, the 114-residue chain is Putative pterin-4-alpha-carbinolamine dehydratase (114 aa).

It belongs to the pterin-4-alpha-carbinolamine dehydratase family.

It catalyses the reaction (4aS,6R)-4a-hydroxy-L-erythro-5,6,7,8-tetrahydrobiopterin = (6R)-L-erythro-6,7-dihydrobiopterin + H2O. The sequence is that of Putative pterin-4-alpha-carbinolamine dehydratase from Pseudoalteromonas translucida (strain TAC 125).